The primary structure comprises 161 residues: Small ribosomal subunit protein uS9 (161 aa).

A compositionally biased stretch (polar residues) spans Met-1–Glu-21. Residues Met-1–Pro-25 are disordered.

It belongs to the universal ribosomal protein uS9 family.

This chain is Small ribosomal subunit protein uS9, found in Methylorubrum populi (strain ATCC BAA-705 / NCIMB 13946 / BJ001) (Methylobacterium populi).